The primary structure comprises 182 residues: MSNFLRKKLHLCFSSSGGLSPSIPSSPIIVSNHNAQSHPHHTPSIFINNFNSLYDQLSVSSPLHRRHSSENPAGVFSTNRREEEEEDETTTSVSKLLSGGTAIMKHIESPDPYRDFGRSMREMVEARDLTRDVVADREYLHELLFCYLYLNPKHTHRFIVSAFADTLLWLLSPSPSPEHFLS.

The segment at 62 to 94 (PLHRRHSSENPAGVFSTNRREEEEEDETTTSVS) is disordered. In terms of domain architecture, OVATE spans 104–169 (MKHIESPDPY…VSAFADTLLW (66 aa)).

In terms of tissue distribution, expressed in roots, rosette and cauline leaves, shoots, stems, flower buds and siliques.

Its subcellular location is the nucleus. In terms of biological role, transcriptional repressor that may regulate multiple aspects of plant growth and development through the regulation of BEL1-LIKE (BLH) and KNOX TALE (KNAT) homeodomain transcription factors. The sequence is that of Transcription repressor OFP11 (OFP11) from Arabidopsis thaliana (Mouse-ear cress).